The following is a 666-amino-acid chain: ATP synthase subunit alpha 2 (666 aa).

182–189 (GDRATGKT) contributes to the ATP binding site. The segment at 527 to 666 (MPAEDAAGDI…DAEAEARHKR (140 aa)) is disordered. Residues 545-590 (ARGDADRDADHGANREVSREVSPEASREVSREVSCEVSHEADRDAA) show a composition bias toward basic and acidic residues. Residues 591–601 (ADAARVAGRAP) show a composition bias toward low complexity. Positions 623 to 641 (ADGDRASASRPRPDARGDA) are enriched in basic and acidic residues.

Belongs to the ATPase alpha/beta chains family. F-type ATPases have 2 components, CF(1) - the catalytic core - and CF(0) - the membrane proton channel. CF(1) has five subunits: alpha(3), beta(3), gamma(1), delta(1), epsilon(1). CF(0) has three main subunits: a(1), b(2) and c(9-12). The alpha and beta chains form an alternating ring which encloses part of the gamma chain. CF(1) is attached to CF(0) by a central stalk formed by the gamma and epsilon chains, while a peripheral stalk is formed by the delta and b chains.

It localises to the cell inner membrane. It catalyses the reaction ATP + H2O + 4 H(+)(in) = ADP + phosphate + 5 H(+)(out). In terms of biological role, produces ATP from ADP in the presence of a proton gradient across the membrane. The alpha chain is a regulatory subunit. In Burkholderia pseudomallei (strain K96243), this protein is ATP synthase subunit alpha 2.